The primary structure comprises 862 residues: Leucine--tRNA ligase (862 aa).

Residues 51–61 (PYPSGSLHMGH) carry the 'HIGH' region motif. Residues 624-628 (KMSKS) carry the 'KMSKS' region motif. K627 lines the ATP pocket.

Belongs to the class-I aminoacyl-tRNA synthetase family.

The protein localises to the cytoplasm. The enzyme catalyses tRNA(Leu) + L-leucine + ATP = L-leucyl-tRNA(Leu) + AMP + diphosphate. In Prochlorococcus marinus (strain NATL2A), this protein is Leucine--tRNA ligase.